Consider the following 478-residue polypeptide: Cysteine protease ATG4B (478 aa).

A compositionally biased stretch (polar residues) spans 1-15 (MTSLPDRGVSSSSSD). The segment at 1–20 (MTSLPDRGVSSSSSDPLCEG) is disordered. The active-site Nucleophile is Cys-164. Active-site residues include Asp-361 and His-363.

The protein belongs to the peptidase C54 family. In terms of assembly, interacts with ATG8. In terms of tissue distribution, constitutively expressed.

Its subcellular location is the cytoplasm. The enzyme catalyses [protein]-C-terminal L-amino acid-glycyl-phosphatidylethanolamide + H2O = [protein]-C-terminal L-amino acid-glycine + a 1,2-diacyl-sn-glycero-3-phosphoethanolamine. Its function is as follows. Cysteine protease that plays a key role in autophagy by mediating both proteolytic activation and delipidation of ATG8 family proteins. The protease activity is required for proteolytic activation of ATG8 family proteins: cleaves the C-terminal amino acid of ATG8 proteins to reveal a C-terminal glycine. Exposure of the glycine at the C-terminus is essential for ATG8 proteins conjugation to phosphatidylethanolamine (PE) and insertion to membranes, which is necessary for autophagy. In addition to the protease activity, also mediates delipidation of PE-conjugated ATG8 proteins. The protein is Cysteine protease ATG4B (ATG4B) of Oryza sativa subsp. indica (Rice).